The following is a 1164-amino-acid chain: WASH complex subunit 5 (1164 aa).

This sequence belongs to the strumpellin family. As to quaternary structure, probable component of the WASH complex.

The polypeptide is WASH complex subunit 5 (Dictyostelium discoideum (Social amoeba)).